The chain runs to 188 residues: ATP synthase subunit delta (188 aa).

This sequence belongs to the ATPase delta chain family. In terms of assembly, F-type ATPases have 2 components, F(1) - the catalytic core - and F(0) - the membrane proton channel. F(1) has five subunits: alpha(3), beta(3), gamma(1), delta(1), epsilon(1). F(0) has three main subunits: a(1), b(2) and c(10-14). The alpha and beta chains form an alternating ring which encloses part of the gamma chain. F(1) is attached to F(0) by a central stalk formed by the gamma and epsilon chains, while a peripheral stalk is formed by the delta and b chains.

It localises to the cell inner membrane. Its function is as follows. F(1)F(0) ATP synthase produces ATP from ADP in the presence of a proton or sodium gradient. F-type ATPases consist of two structural domains, F(1) containing the extramembraneous catalytic core and F(0) containing the membrane proton channel, linked together by a central stalk and a peripheral stalk. During catalysis, ATP synthesis in the catalytic domain of F(1) is coupled via a rotary mechanism of the central stalk subunits to proton translocation. This protein is part of the stalk that links CF(0) to CF(1). It either transmits conformational changes from CF(0) to CF(1) or is implicated in proton conduction. The sequence is that of ATP synthase subunit delta from Paracoccus denitrificans (strain Pd 1222).